Consider the following 198-residue polypeptide: Carnitine operon protein CaiE (198 aa).

Residues 179-198 (VEENRPRLKGTTDVKPKSAQ) form a disordered region. A compositionally biased stretch (basic and acidic residues) spans 180-198 (EENRPRLKGTTDVKPKSAQ).

The protein belongs to the transferase hexapeptide repeat family.

Its pathway is amine and polyamine metabolism; carnitine metabolism. Its function is as follows. Overproduction of CaiE stimulates the activity of CaiB and CaiD. In Salmonella typhi, this protein is Carnitine operon protein CaiE.